A 483-amino-acid polypeptide reads, in one-letter code: Isocitrate dehydrogenase [NADP] (483 aa).

T74 is an NADP(+) binding site. D-threo-isocitrate-binding residues include S83, N85, R89, R99, and R121. Mg(2+) is bound at residue D232. Residues 264–270 and N277 contribute to the NADP(+) site; that span reads HGSAPDI.

It belongs to the isocitrate and isopropylmalate dehydrogenases family. Homodimer. Mg(2+) serves as cofactor. It depends on Mn(2+) as a cofactor.

It carries out the reaction D-threo-isocitrate + NADP(+) = 2-oxoglutarate + CO2 + NADPH. Catalyzes the oxidative decarboxylation of isocitrate to 2-oxoglutarate and carbon dioxide with the concomitant reduction of NADP(+). In Rickettsia felis (strain ATCC VR-1525 / URRWXCal2) (Rickettsia azadi), this protein is Isocitrate dehydrogenase [NADP] (icd).